We begin with the raw amino-acid sequence, 174 residues long: MAFPDTDVSPPRGGPSSPAKSPLLRSFKVKTYIPKNDEQNWVVVDASGVPLGRLATLIASRIRGKHRPDFTPNMIQGDFVVVINAAQVALTGKKLDDKVYTRYTGYQGGLKTETAREALSKHPERVIEHAVFGMLPKGRQGRAMHTRLKVYAGETHPHSAQKPQVLKTQPLEVK.

2 disordered regions span residues 1-22 (MAFP…AKSP) and 153-174 (GETH…LEVK).

Belongs to the universal ribosomal protein uL13 family. As to quaternary structure, part of the 50S ribosomal subunit. Contacts proteins L3 and L20.

Functionally, this protein is one of the early assembly proteins of the 50S ribosomal subunit. Binds to the 23S rRNA. This chain is Large ribosomal subunit protein uL13 (rplM), found in Deinococcus radiodurans (strain ATCC 13939 / DSM 20539 / JCM 16871 / CCUG 27074 / LMG 4051 / NBRC 15346 / NCIMB 9279 / VKM B-1422 / R1).